The sequence spans 215 residues: Cytochrome b6 (215 aa).

The chain crosses the membrane as a helical span at residues 32-52; that stretch reads IFYCLGGITLTCFLIQFATGF. Residue cysteine 35 participates in heme c binding. Heme b contacts are provided by histidine 86 and histidine 100. Helical transmembrane passes span 90-110, 116-136, and 186-206; these read ASMM…TGGF, LTWV…VTGY, and AHTF…FLMI. Positions 187 and 202 each coordinate heme b.

It belongs to the cytochrome b family. PetB subfamily. The 4 large subunits of the cytochrome b6-f complex are cytochrome b6, subunit IV (17 kDa polypeptide, PetD), cytochrome f and the Rieske protein, while the 4 small subunits are PetG, PetL, PetM and PetN. The complex functions as a dimer. Requires heme b as cofactor. Heme c is required as a cofactor.

The protein resides in the cellular thylakoid membrane. Component of the cytochrome b6-f complex, which mediates electron transfer between photosystem II (PSII) and photosystem I (PSI), cyclic electron flow around PSI, and state transitions. The protein is Cytochrome b6 of Desmonostoc sp. (strain PCC 7906) (Nostoc sp. (strain PCC 7906)).